A 137-amino-acid polypeptide reads, in one-letter code: Large ribosomal subunit protein uL22c (137 aa).

Belongs to the universal ribosomal protein uL22 family. As to quaternary structure, part of the 50S ribosomal subunit.

Its subcellular location is the plastid. It localises to the chloroplast. In terms of biological role, this protein binds specifically to 23S rRNA. Functionally, the globular domain of the protein is located near the polypeptide exit tunnel on the outside of the subunit, while an extended beta-hairpin is found that lines the wall of the exit tunnel in the center of the 70S ribosome. The polypeptide is Large ribosomal subunit protein uL22c (rpl22) (Oenothera argillicola (Appalachian evening primrose)).